Reading from the N-terminus, the 482-residue chain is tRNA sulfurtransferase (482 aa).

Residues P61 to R165 form the THUMP domain. ATP-binding positions include L183 to I184, K265, G287, and Q296. C344 and C456 form a disulfide bridge. The 79-residue stretch at F404–P482 folds into the Rhodanese domain. C456 functions as the Cysteine persulfide intermediate in the catalytic mechanism.

It belongs to the ThiI family.

It localises to the cytoplasm. The catalysed reaction is [ThiI sulfur-carrier protein]-S-sulfanyl-L-cysteine + a uridine in tRNA + 2 reduced [2Fe-2S]-[ferredoxin] + ATP + H(+) = [ThiI sulfur-carrier protein]-L-cysteine + a 4-thiouridine in tRNA + 2 oxidized [2Fe-2S]-[ferredoxin] + AMP + diphosphate. It carries out the reaction [ThiS sulfur-carrier protein]-C-terminal Gly-Gly-AMP + S-sulfanyl-L-cysteinyl-[cysteine desulfurase] + AH2 = [ThiS sulfur-carrier protein]-C-terminal-Gly-aminoethanethioate + L-cysteinyl-[cysteine desulfurase] + A + AMP + 2 H(+). It functions in the pathway cofactor biosynthesis; thiamine diphosphate biosynthesis. In terms of biological role, catalyzes the ATP-dependent transfer of a sulfur to tRNA to produce 4-thiouridine in position 8 of tRNAs, which functions as a near-UV photosensor. Also catalyzes the transfer of sulfur to the sulfur carrier protein ThiS, forming ThiS-thiocarboxylate. This is a step in the synthesis of thiazole, in the thiamine biosynthesis pathway. The sulfur is donated as persulfide by IscS. This chain is tRNA sulfurtransferase, found in Klebsiella pneumoniae (strain 342).